A 443-amino-acid chain; its full sequence is MFLAQEIIRKKRNAEALSKEEIQFFVKGITDNSVSEGQIAALGMAVYFNDMTMDERIALTTAMRDSGTVLNWDSLGLNGPVIDKHSTGGVGDVISLMLGPMAAACGGYVPMISGRGLGHTGGTLDKFDAIPGYQTEPSSELFRKVVKEAGVAIIGQTGDLVPADKRFYSIRDNTATVESISLITASILSKKLAAGLDALAMDVKVGSGAFMPTYEASLELARSITAVANGAGTKTTALLTDMNQVLASCAGNALEVKEAVDFLTGKYRNPRLYEVTMGLCAEMLVLGGLAANDADARTKLNTVLDNGRAAEIFGKMVSGLGGPADFVESYDKYLPKASIIRPVYAERDGFAYSMVTRELGLAVVTLGGGRRKPGDALDYSVGLSNVCALGQPINKDTPLAVIHAQSEAAFEEAARAVRGAITVSDKQPEKTPEIYQYVRAEDL.

The protein belongs to the thymidine/pyrimidine-nucleoside phosphorylase family. Homodimer.

The enzyme catalyses thymidine + phosphate = 2-deoxy-alpha-D-ribose 1-phosphate + thymine. The protein operates within pyrimidine metabolism; dTMP biosynthesis via salvage pathway; dTMP from thymine: step 1/2. The enzymes which catalyze the reversible phosphorolysis of pyrimidine nucleosides are involved in the degradation of these compounds and in their utilization as carbon and energy sources, or in the rescue of pyrimidine bases for nucleotide synthesis. The sequence is that of Thymidine phosphorylase from Shewanella amazonensis (strain ATCC BAA-1098 / SB2B).